We begin with the raw amino-acid sequence, 225 residues long: Peptidyl-tRNA hydrolase (225 aa).

Tyr14 lines the tRNA pocket. The active-site Proton acceptor is His19. The tRNA site is built by Phe64, Asn66, and Asn112. A disordered region spans residues 187–225 (MQPPKPEKPKGEAKPAAPEAPEAAPDTRSALQRLADRFR). The segment covering 200 to 210 (KPAAPEAPEAA) has biased composition (low complexity).

The protein belongs to the PTH family. Monomer.

It is found in the cytoplasm. The catalysed reaction is an N-acyl-L-alpha-aminoacyl-tRNA + H2O = an N-acyl-L-amino acid + a tRNA + H(+). Functionally, hydrolyzes ribosome-free peptidyl-tRNAs (with 1 or more amino acids incorporated), which drop off the ribosome during protein synthesis, or as a result of ribosome stalling. In terms of biological role, catalyzes the release of premature peptidyl moieties from peptidyl-tRNA molecules trapped in stalled 50S ribosomal subunits, and thus maintains levels of free tRNAs and 50S ribosomes. This chain is Peptidyl-tRNA hydrolase, found in Cereibacter sphaeroides (strain ATCC 17025 / ATH 2.4.3) (Rhodobacter sphaeroides).